Here is a 152-residue protein sequence, read N- to C-terminus: Anti-CBASS protein Acb1 (152 aa).

A 3',3'-cGAMP-binding site is contributed by tyrosine 12. Tyrosine 12 is a binding site for 3',3'-cUAMP. Catalysis depends on residues histidine 44, threonine 46, histidine 113, and threonine 115. 3',3'-cGAMP contacts are provided by glutamate 141 and tryptophan 147. 3',3'-cUAMP-binding residues include glutamate 141 and tryptophan 147.

The protein belongs to the anti-CBASS protein Acb1 family.

It carries out the reaction 3',3'-cUAMP + H2O = U[3'-5']pAp[3'] + H(+). The enzyme catalyses 3',3',3'-c-tri-AMP + H2O = A[3'-5']pA[3'-5']pAp[3'] + H(+). The catalysed reaction is 3',3',3'-cAAG + H2O = G[3'-5']pA[3'-5']pAp[3'] + H(+). It catalyses the reaction 3',3',3'-cAAG + H2O = A[3'-5']pG[3'-5']pAp[3'] + H(+). It carries out the reaction 3',3'-cGAMP + H2O = G[3'-5']pAp[3'] + H(+). Its function is as follows. Counteracts the host CBASS antiviral defense system. Phosphodiesterase that enables metal-independent hydrolysis of the host cyclic di- and trinucleotide CBASS signals such as 3'3'-cGAMP, 3'3'cUA, and 3'3'3'-cAAA. Does not cleave cGG or cA4. Besides evasion of the CBASS system, might also enable evasion of the type III CRISPR systems that use cA3 signals. This chain is Anti-CBASS protein Acb1, found in Salmonella phage S16 (Salmonella phage vB_SenM-S16).